Here is a 225-residue protein sequence, read N- to C-terminus: 2-phytyl-1,4-naphtoquinone methyltransferase (225 aa).

It belongs to the class I-like SAM-binding methyltransferase superfamily. MenG/UbiE family.

The catalysed reaction is demethylphylloquinol + S-adenosyl-L-methionine = phylloquinol + S-adenosyl-L-homocysteine + H(+). Its pathway is cofactor biosynthesis; phylloquinone biosynthesis. In terms of biological role, methyltransferase required for the conversion of 2-phytyl-1,4-beta-naphthoquinol to phylloquinol. The chain is 2-phytyl-1,4-naphtoquinone methyltransferase from Thermosynechococcus vestitus (strain NIES-2133 / IAM M-273 / BP-1).